Here is a 729-residue protein sequence, read N- to C-terminus: Fatty acid oxidation complex subunit alpha (729 aa).

The enoyl-CoA hydratase/isomerase stretch occupies residues 1-189 (MLYKGDTLYL…KIGLVDGVVK (189 aa)). Aspartate 296 contributes to the substrate binding site. The 3-hydroxyacyl-CoA dehydrogenase stretch occupies residues 311 to 729 (ETPKQAAVLG…ARPVGDLKTA (419 aa)). Residues methionine 324, aspartate 343, 400-402 (VVE), lysine 407, and serine 429 contribute to the NAD(+) site. The active-site For 3-hydroxyacyl-CoA dehydrogenase activity is the histidine 450. Asparagine 453 lines the NAD(+) pocket. Asparagine 500 and tyrosine 660 together coordinate substrate. A disordered region spans residues 708–729 (RHNEPYYPPVEPARPVGDLKTA).

It in the N-terminal section; belongs to the enoyl-CoA hydratase/isomerase family. In the C-terminal section; belongs to the 3-hydroxyacyl-CoA dehydrogenase family. As to quaternary structure, heterotetramer of two alpha chains (FadB) and two beta chains (FadA).

It catalyses the reaction a (3S)-3-hydroxyacyl-CoA + NAD(+) = a 3-oxoacyl-CoA + NADH + H(+). The enzyme catalyses a (3S)-3-hydroxyacyl-CoA = a (2E)-enoyl-CoA + H2O. The catalysed reaction is a 4-saturated-(3S)-3-hydroxyacyl-CoA = a (3E)-enoyl-CoA + H2O. It carries out the reaction (3S)-3-hydroxybutanoyl-CoA = (3R)-3-hydroxybutanoyl-CoA. It catalyses the reaction a (3Z)-enoyl-CoA = a 4-saturated (2E)-enoyl-CoA. The enzyme catalyses a (3E)-enoyl-CoA = a 4-saturated (2E)-enoyl-CoA. The protein operates within lipid metabolism; fatty acid beta-oxidation. Functionally, involved in the aerobic and anaerobic degradation of long-chain fatty acids via beta-oxidation cycle. Catalyzes the formation of 3-oxoacyl-CoA from enoyl-CoA via L-3-hydroxyacyl-CoA. It can also use D-3-hydroxyacyl-CoA and cis-3-enoyl-CoA as substrate. This chain is Fatty acid oxidation complex subunit alpha, found in Escherichia coli O139:H28 (strain E24377A / ETEC).